The following is a 215-amino-acid chain: S-crystallin 2 (215 aa).

A GST N-terminal domain is found at 2–80 (PSYTLHYFNH…YLAREFGFHG (79 aa)). In terms of domain architecture, GST C-terminal spans 82–215 (NNLDMARVDF…YLKSRSSTDF (134 aa)).

It belongs to the GST superfamily. In terms of tissue distribution, lens.

Functionally, S-crystallins are structural components of squids and octopi eye lens. Contains relatively little GST activity (1/1000 of that of mammalian GST enzyme). This chain is S-crystallin 2 (OCTS2), found in Octopus vulgaris (Common octopus).